The chain runs to 493 residues: Guanosine-5'-triphosphate,3'-diphosphate pyrophosphatase (493 aa).

The protein belongs to the GppA/Ppx family. GppA subfamily.

The enzyme catalyses guanosine 3'-diphosphate 5'-triphosphate + H2O = guanosine 3',5'-bis(diphosphate) + phosphate + H(+). Its pathway is purine metabolism; ppGpp biosynthesis; ppGpp from GTP: step 2/2. Catalyzes the conversion of pppGpp to ppGpp. Guanosine pentaphosphate (pppGpp) is a cytoplasmic signaling molecule which together with ppGpp controls the 'stringent response', an adaptive process that allows bacteria to respond to amino acid starvation, resulting in the coordinated regulation of numerous cellular activities. This chain is Guanosine-5'-triphosphate,3'-diphosphate pyrophosphatase, found in Salmonella paratyphi A (strain ATCC 9150 / SARB42).